The sequence spans 466 residues: Bifunctional protein GlmU (466 aa).

The interval 1–236 is pyrophosphorylase; the sequence is MEVMPQPLTI…PAEALGINDR (236 aa). UDP-N-acetyl-alpha-D-glucosamine is bound by residues 13–16, lysine 27, glutamine 79, 84–85, 107–109, glycine 146, glutamate 161, asparagine 176, and asparagine 234; these read LAAG, GT, and YGD. Aspartate 109 contacts Mg(2+). Residue asparagine 234 participates in Mg(2+) binding. The interval 237–257 is linker; that stretch reads AQLAEVDRIFRDRKRRAVMAA. The N-acetyltransferase stretch occupies residues 258–466; the sequence is GVTLIQPETI…AKKRRKLAKT (209 aa). Arginine 340 and lysine 358 together coordinate UDP-N-acetyl-alpha-D-glucosamine. Histidine 370 functions as the Proton acceptor in the catalytic mechanism. UDP-N-acetyl-alpha-D-glucosamine is bound by residues tyrosine 373 and asparagine 384. Residues alanine 387, 393–394, serine 412, alanine 430, and arginine 447 contribute to the acetyl-CoA site; that span reads NY.

This sequence in the N-terminal section; belongs to the N-acetylglucosamine-1-phosphate uridyltransferase family. The protein in the C-terminal section; belongs to the transferase hexapeptide repeat family. In terms of assembly, homotrimer. It depends on Mg(2+) as a cofactor.

It localises to the cytoplasm. It catalyses the reaction alpha-D-glucosamine 1-phosphate + acetyl-CoA = N-acetyl-alpha-D-glucosamine 1-phosphate + CoA + H(+). It carries out the reaction N-acetyl-alpha-D-glucosamine 1-phosphate + UTP + H(+) = UDP-N-acetyl-alpha-D-glucosamine + diphosphate. It participates in nucleotide-sugar biosynthesis; UDP-N-acetyl-alpha-D-glucosamine biosynthesis; N-acetyl-alpha-D-glucosamine 1-phosphate from alpha-D-glucosamine 6-phosphate (route II): step 2/2. Its pathway is nucleotide-sugar biosynthesis; UDP-N-acetyl-alpha-D-glucosamine biosynthesis; UDP-N-acetyl-alpha-D-glucosamine from N-acetyl-alpha-D-glucosamine 1-phosphate: step 1/1. It functions in the pathway bacterial outer membrane biogenesis; LPS lipid A biosynthesis. Its function is as follows. Catalyzes the last two sequential reactions in the de novo biosynthetic pathway for UDP-N-acetylglucosamine (UDP-GlcNAc). The C-terminal domain catalyzes the transfer of acetyl group from acetyl coenzyme A to glucosamine-1-phosphate (GlcN-1-P) to produce N-acetylglucosamine-1-phosphate (GlcNAc-1-P), which is converted into UDP-GlcNAc by the transfer of uridine 5-monophosphate (from uridine 5-triphosphate), a reaction catalyzed by the N-terminal domain. This chain is Bifunctional protein GlmU, found in Solibacter usitatus (strain Ellin6076).